Here is a 112-residue protein sequence, read N- to C-terminus: Large ribosomal subunit protein P1w (112 aa).

The tract at residues 85–112 (AAAPAAEEKKKDEPAEESDGDLGFGLFD) is disordered. Position 102 is a phosphoserine (Ser-102).

Belongs to the eukaryotic ribosomal protein P1/P2 family. As to quaternary structure, P1 and P2 exist as dimers at the large ribosomal subunit.

Its function is as follows. Plays an important role in the elongation step of protein synthesis. In Arabidopsis thaliana (Mouse-ear cress), this protein is Large ribosomal subunit protein P1w (RPP1A).